We begin with the raw amino-acid sequence, 294 residues long: Bifunctional protein FolD (294 aa).

NADP(+) contacts are provided by residues 175–177 (GVS) and Ile-243.

Belongs to the tetrahydrofolate dehydrogenase/cyclohydrolase family. Homodimer.

It catalyses the reaction (6R)-5,10-methylene-5,6,7,8-tetrahydrofolate + NADP(+) = (6R)-5,10-methenyltetrahydrofolate + NADPH. The catalysed reaction is (6R)-5,10-methenyltetrahydrofolate + H2O = (6R)-10-formyltetrahydrofolate + H(+). Its pathway is one-carbon metabolism; tetrahydrofolate interconversion. Its function is as follows. Catalyzes the oxidation of 5,10-methylenetetrahydrofolate to 5,10-methenyltetrahydrofolate and then the hydrolysis of 5,10-methenyltetrahydrofolate to 10-formyltetrahydrofolate. The protein is Bifunctional protein FolD of Xanthomonas campestris pv. campestris (strain 8004).